The chain runs to 785 residues: Endonuclease MutS2 (785 aa).

Residue 335–342 participates in ATP binding; sequence GPNTGGKT. The Smr domain maps to 710–785; the sequence is LDLRGERYED…GNGVTIVEFK (76 aa).

Belongs to the DNA mismatch repair MutS family. MutS2 subfamily. As to quaternary structure, homodimer. Binds to stalled ribosomes, contacting rRNA.

Functionally, endonuclease that is involved in the suppression of homologous recombination and thus may have a key role in the control of bacterial genetic diversity. Acts as a ribosome collision sensor, splitting the ribosome into its 2 subunits. Detects stalled/collided 70S ribosomes which it binds and splits by an ATP-hydrolysis driven conformational change. Acts upstream of the ribosome quality control system (RQC), a ribosome-associated complex that mediates the extraction of incompletely synthesized nascent chains from stalled ribosomes and their subsequent degradation. Probably generates substrates for RQC. The protein is Endonuclease MutS2 of Listeria monocytogenes serovar 1/2a (strain ATCC BAA-679 / EGD-e).